A 343-amino-acid chain; its full sequence is Glyceraldehyde-3-phosphate dehydrogenase (343 aa).

NAD(+) is bound by residues 13 to 14 (TI) and Gly-111. Position 140 to 142 (140 to 142 (SCN)) interacts with D-glyceraldehyde 3-phosphate. The Nucleophile role is filled by Cys-141. Arg-169 is a binding site for NAD(+). 195–196 (HA) provides a ligand contact to D-glyceraldehyde 3-phosphate. Gln-303 contributes to the NAD(+) binding site.

Belongs to the glyceraldehyde-3-phosphate dehydrogenase family. Homotetramer.

The protein localises to the cytoplasm. It carries out the reaction D-glyceraldehyde 3-phosphate + phosphate + NADP(+) = (2R)-3-phospho-glyceroyl phosphate + NADPH + H(+). The enzyme catalyses D-glyceraldehyde 3-phosphate + phosphate + NAD(+) = (2R)-3-phospho-glyceroyl phosphate + NADH + H(+). Its pathway is carbohydrate degradation; glycolysis; pyruvate from D-glyceraldehyde 3-phosphate: step 1/5. This is Glyceraldehyde-3-phosphate dehydrogenase from Sulfurisphaera tokodaii (strain DSM 16993 / JCM 10545 / NBRC 100140 / 7) (Sulfolobus tokodaii).